The chain runs to 290 residues: Ribosomal RNA small subunit methyltransferase A (290 aa).

S-adenosyl-L-methionine-binding residues include asparagine 28, leucine 30, glycine 55, glutamate 76, aspartate 102, and asparagine 126.

The protein belongs to the class I-like SAM-binding methyltransferase superfamily. rRNA adenine N(6)-methyltransferase family. RsmA subfamily.

Its subcellular location is the cytoplasm. The enzyme catalyses adenosine(1518)/adenosine(1519) in 16S rRNA + 4 S-adenosyl-L-methionine = N(6)-dimethyladenosine(1518)/N(6)-dimethyladenosine(1519) in 16S rRNA + 4 S-adenosyl-L-homocysteine + 4 H(+). In terms of biological role, specifically dimethylates two adjacent adenosines (A1518 and A1519) in the loop of a conserved hairpin near the 3'-end of 16S rRNA in the 30S particle. May play a critical role in biogenesis of 30S subunits. The polypeptide is Ribosomal RNA small subunit methyltransferase A (Lachnoclostridium phytofermentans (strain ATCC 700394 / DSM 18823 / ISDg) (Clostridium phytofermentans)).